The primary structure comprises 132 residues: uncharacterized protein (132 aa).

An N-terminal signal peptide occupies residues 1–17 (MCPECFFLMLFFCGYRA). Positions 25 to 39 (SSSSSSSSSSSFRSS) are enriched in low complexity. A disordered region spans residues 25-79 (SSSSSSSSSSSFRSSPAYGFSGRPPGGAGCRERSQRSCLRPGGLPSLTRNPGLQR).

This is an uncharacterized protein from Escherichia coli (strain K12).